The sequence spans 516 residues: Probable inactive beta-glucosidase 14 (516 aa).

A signal peptide spans 1–23 (MAAAWLVVLLTVHRLLHLSGVSA). Residues glutamine 43, histidine 145, and 190 to 191 (NQ) contribute to the a beta-D-glucoside site. N-linked (GlcNAc...) asparagine glycosylation is present at asparagine 193. Cysteine 210 and cysteine 217 are joined by a disulfide. Residues asparagine 221 and asparagine 270 are each glycosylated (N-linked (GlcNAc...) asparagine). Tyrosine 334 contacts a beta-D-glucoside. An intrachain disulfide couples cysteine 342 to cysteine 347. Residue glutamate 405 participates in a beta-D-glucoside binding. The Nucleophile role is filled by glutamate 405. 2 N-linked (GlcNAc...) asparagine glycosylation sites follow: asparagine 415 and asparagine 423. A beta-D-glucoside contacts are provided by residues tryptophan 454, 461–462 (EW), and phenylalanine 470.

The protein belongs to the glycosyl hydrolase 1 family. Expressed in flowers and endosperm.

The chain is Probable inactive beta-glucosidase 14 from Oryza sativa subsp. japonica (Rice).